The following is a 789-amino-acid chain: Aconitate hydratase, mitochondrial (789 aa).

The transit peptide at 1–32 (MFCKISRAPARMGSRIFTQSTLRSFSCAPVAA) directs the protein to the mitochondrion. Residues Gln106 and 199–201 (DSH) contribute to the substrate site. Positions 392, 455, and 458 each coordinate [4Fe-4S] cluster. Residues Arg481, Arg486, Arg613, and 676–677 (SR) contribute to the substrate site.

Belongs to the aconitase/IPM isomerase family. Monomer. Requires [4Fe-4S] cluster as cofactor.

The protein resides in the mitochondrion. The catalysed reaction is citrate = D-threo-isocitrate. The protein operates within carbohydrate metabolism; tricarboxylic acid cycle; isocitrate from oxaloacetate: step 2/2. Catalyzes the isomerization of citrate to isocitrate via cis-aconitate, a step in the citric acid cycle. The polypeptide is Aconitate hydratase, mitochondrial (Schizosaccharomyces pombe (strain 972 / ATCC 24843) (Fission yeast)).